The chain runs to 1066 residues: MKFGKQIQKRQLEVPEYAASFVNYKALKKLIKKLSATPILPPQTDLRRAPGEPLDTQSALQANKATFFFQIDRELDKVNACYVQKEAELKIRLKTLLDKKKALRSRSGGTSRRSTKFTTLQEGFQQFVNDLNKLQQFVEINGTAFSKILKKWDKTAKSKTKELYLSRVVEKRPAFNPTVISELSDQATTSLQELGAWADGDNVSFETRPDHDHVVSTQHLLGTDEGDADTLLLDTVLSGNIDSLKDMLDRMKATAAPDGSADVSLAERVTRTFLASINEGSLEALKVLLDTGLVDIQSWDDINERNCLHQAAIYGNSFVLEYGLSKGVDAERTDAYGRVPLHYASMHGRLDMIDALLNASPKTINLIDHDNFTPLVHSIVRNHLECVGRLLERSARIDPVSDTDHVPLNLACQHGSVAIVELLLKHGAKILADAEGLYPQHLVARSGQTPEILVLLKQYGADLDQIDKLYGWTPLVHAASEGNVPCLQALLETGADPNILDEKDLPAMYYAAWEGHLECMKLLTPAKKEKAASELPPIHIGGALPPMASSTAPMPMSLDAIDPIPALELPPPIIPLRRYGHNFLDTKTVVQISFEEDSEQPLLFFQDGKYPAARLTISSKSSDLIPKNIILPFQEDTRVASFQIDNLESFTLDFEVFPTYGAKVIAKTVALPNIFRALLSSSGKCCLPLFDPRLRAIGQISFHVQIIKPFSGTPLEITDFETYWKATSQFDTNTSTFVTGSSLSGDFVQIYVQHTKDGVPVLWPRWTINCGGIDVPVSTLTLAQFQTVTAAARNRINLSELSTYTLDQIADVHRILANIGITLHEALFLLPKGMHVNIQVLYPTADEKAEAKSSTAADDVNEFADAILSVVFDHARAQRAERPDSVRSVVFSSYNPTLCTALNWKQPNFPVFLCNDMGREDRKQQQQGSCSKGDGDEDMGGTTAASRREAADERTLQSDGRRTSSIKDVVRTATSNNLMGLICCSRLLDMVPALVDAIKSHGLALVVDKSGEPEAANSKDSGDKQLGISGALGGLAGSDPFPKLPKGVDGLLKSNGVLRFNEYIDV.

The region spanning 1 to 166 (MKFGKQIQKR…KSKTKELYLS (166 aa)) is the SPX domain. ANK repeat units follow at residues 268–298 (RVTR…DIQS), 336–366 (YGRV…TINL), 370–399 (DNFT…RIDP), 403–432 (TDHV…KILA), 435–465 (EGLY…DLDQ), 470–499 (YGWT…DPNI), and 503–532 (KDLP…EKAA). Positions 717–1048 (ITDFETYWKA…DPFPKLPKGV (332 aa)) constitute a GP-PDE domain. Positions 923–963 (KQQQQGSCSKGDGDEDMGGTTAASRREAADERTLQSDGRRT) are disordered. Residues 946–962 (SRREAADERTLQSDGRR) are compositionally biased toward basic and acidic residues.

Its function is as follows. Controls phosphorus acquisition. The polypeptide is Ankyrin repeat protein nuc-2 (nuc-2) (Neurospora crassa (strain ATCC 24698 / 74-OR23-1A / CBS 708.71 / DSM 1257 / FGSC 987)).